The chain runs to 186 residues: Ribosome-recycling factor (186 aa).

It belongs to the RRF family.

Its subcellular location is the cytoplasm. Its function is as follows. Responsible for the release of ribosomes from messenger RNA at the termination of protein biosynthesis. May increase the efficiency of translation by recycling ribosomes from one round of translation to another. The sequence is that of Ribosome-recycling factor from Beijerinckia indica subsp. indica (strain ATCC 9039 / DSM 1715 / NCIMB 8712).